The sequence spans 138 residues: Cysteine desulfuration protein SufE (138 aa).

The Cysteine persulfide intermediate role is filled by Cys51.

The protein belongs to the SufE family. As to quaternary structure, homodimer. Interacts with SufS.

It localises to the cytoplasm. It participates in cofactor biosynthesis; iron-sulfur cluster biosynthesis. Participates in cysteine desulfuration mediated by SufS. Cysteine desulfuration mobilizes sulfur from L-cysteine to yield L-alanine and constitutes an essential step in sulfur metabolism for biosynthesis of a variety of sulfur-containing biomolecules. Functions as a sulfur acceptor for SufS, by mediating the direct transfer of the sulfur atom from the S-sulfanylcysteine of SufS, an intermediate product of cysteine desulfuration process. The sequence is that of Cysteine desulfuration protein SufE from Pectobacterium atrosepticum (strain SCRI 1043 / ATCC BAA-672) (Erwinia carotovora subsp. atroseptica).